Here is a 691-residue protein sequence, read N- to C-terminus: Methionine--tRNA ligase (691 aa).

The short motif at 14 to 24 (PYANGPFHLGH) is the 'HIGH' region element. Cys148, Cys151, Cys161, and Cys164 together coordinate Zn(2+). A 'KMSKS' region motif is present at residues 344-348 (KMSKS). Position 347 (Lys347) interacts with ATP. The tRNA-binding domain maps to 585–691 (DFDRVDLRVA…PGAKPGMRVR (107 aa)).

It belongs to the class-I aminoacyl-tRNA synthetase family. MetG type 1 subfamily. Homodimer. The cofactor is Zn(2+).

It localises to the cytoplasm. The catalysed reaction is tRNA(Met) + L-methionine + ATP = L-methionyl-tRNA(Met) + AMP + diphosphate. Its function is as follows. Is required not only for elongation of protein synthesis but also for the initiation of all mRNA translation through initiator tRNA(fMet) aminoacylation. This is Methionine--tRNA ligase from Verminephrobacter eiseniae (strain EF01-2).